Here is a 170-residue protein sequence, read N- to C-terminus: Cysteine-rich venom protein VAR4 (170 aa).

An N-terminal signal peptide occupies residues 1–22; that stretch reads MILLKLYLTLAAILCQSRGTTS. The region spanning 41–169 is the SCP domain; it reads NKHNDLRRTV…PLKYFLVCQY (129 aa). 3 disulfides stabilise this stretch: C77–C156, C95–C170, and C151–C167.

Belongs to the CRISP family. Post-translationally, contains 8 disulfide bonds. Expressed by the venom gland.

The protein resides in the secreted. In terms of biological role, blocks ryanodine receptors, and potassium channels. The protein is Cysteine-rich venom protein VAR4 of Varanus acanthurus (Ridge-tailed monitor).